The following is a 131-amino-acid chain: Holin-like protein CidA (131 aa).

A run of 4 helical transmembrane segments spans residues 4-24 (VQLI…TYIG), 30-50 (IFHL…LLLQ), 65-85 (FLLK…MDVA), and 88-108 (ITLN…IVAL).

The protein belongs to the CidA/LrgA family. CidA subfamily.

It localises to the cell membrane. Its function is as follows. Increases the activity of extracellular murein hydrolases possibly by mediating their export via hole formation. Inhibited by the antiholin-like proteins LrgAB. In an unstressed cell, the LrgAB products probably inhibit the function of the CidAB proteins. When a cell is stressed by the addition of antibiotics or by other factors in the environment, the CidAB proteins possibly oligomerize within the bacterial cell membrane, creating lesions that disrupt the proton motive force, which in turn results in loss of cell viability. These lesions are also hypothesized to regulate the subsequent cell lysis by either allowing the murein hydrolases access to the cell wall substrate and/or regulating their activity by a possible change in the cell wall pH that results from loss of membrane potential. The chain is Holin-like protein CidA from Staphylococcus aureus (strain Mu3 / ATCC 700698).